The sequence spans 463 residues: POU domain, class 2, transcription factor 2 (463 aa).

Disordered stretches follow at residues 1 to 87, 159 to 182, 259 to 282, 341 to 376, and 393 to 463; these read MVHS…QPHL, QPRA…EEPS, SSLP…GRRR, PCSA…LSQA, and TLHP…PYQP. Residues 12–37 are compositionally biased toward basic and acidic residues; the sequence is RMSKPLEAEKQSLDSPSEHTDTERNG. The segment covering 41-60 has biased composition (polar residues); it reads NHQNPQNKASPFSVSPTGPS. Pro residues predominate over residues 75-85; the sequence is AAPPPPQPAQP. The POU-specific domain occupies 179–253; it reads EEPSDLEELE…LLEKWLNDAE (75 aa). Over residues 259-272 the composition is skewed to low complexity; it reads SSLPSPNQLSSPSL. The segment at residues 281 to 340 is a DNA-binding region (homeobox); sequence RRKKRTSIETNVRFALEKSFLANQKPTSEEILLIAEQLHMEKEVIRVWFCNRRQKEKRIN. The tract at residues 373 to 394 is leucine-zipper; sequence LSQASSSLSTTVTTLSSAVGTL. Positions 400–409 are enriched in gly residues; sequence AGGGGGGGGA.

The protein belongs to the POU transcription factor family. Class-2 subfamily. Interacts with NR3C1, AR and PGR. Interacts with POU2AF1; the interaction increases POU2F2 transactivation activity. As to expression, highest in B cells, but also present in brain (neuronal and glial cells), intestine, kidney, and testes. Expressed at higher levels in B-cells than in neuronal cells. In terms of tissue distribution, expressed in neuronal cell lines and brain, but not dorsal root ganglia. As to expression, expressed at lower levels in neuronal cells than in B cells. Expressed in neuronal cell lines, and at lower levels in neuroblastoma and dorsal root ganglia. In terms of tissue distribution, widely expressed in the developing nervous system but expression is confined to very specific regions in the adult brain, it is expressed at a lower level in B cells. As to expression, either absent in, or expressed at very low levels in neuronal cells and brain. Expressed in all tissues tested: mammary gland, liver, spleen, lung, kidney intestine, uterus and ovary of a virgin mouse. Levels of isoform OCT2.7 are highest in spleen and lung. In mammary gland, expression is localized to the alveolus epithelial cells.

It is found in the cytoplasm. Its subcellular location is the nucleus. Transactivation activity is enhanced by transcriptional coactivator POU2AF1. Transcription factor that specifically binds to the octamer motif (5'-ATTTGCAT-3'). Regulates IL6 expression in B cells with POU2AF1. Regulates transcription in a number of tissues in addition to activating immunoglobulin gene expression. Modulates transcription transactivation by NR3C1, AR and PGR. Its function is as follows. Activates octamer-containing promoters. In terms of biological role, represses some promoters and activate others. Functionally, represses some promoters and activate others. Activates the U2 small nuclear RNA (snRNA) promoter. Unable to bind to the octamer motif, but can still activate the beta-casein gene promoter at low levels. The polypeptide is POU domain, class 2, transcription factor 2 (Mus musculus (Mouse)).